Consider the following 568-residue polypeptide: Autophagy-related protein 18 (568 aa).

One copy of the WD 1 repeat lies at 19–57 (KPSSSVNFITFNQDGSCIAVGNNKGYSIFTTNPFTKCYD). Residues 162-171 (STDTSNSADN) show a composition bias toward polar residues. The interval 162–210 (STDTSNSADNSGSIGSGPASGSGAGSGSASMTSTDSTPDAQSHSYLAYP) is disordered. The span at 175 to 187 (IGSGPASGSGAGS) shows a compositional bias: gly residues. The span at 188–198 (GSASMTSTDST) shows a compositional bias: low complexity. WD repeat units lie at residues 268–308 (AHKS…KLYQ) and 313–352 (TYPT…SLES). The short motif at 309 to 313 (FRRGT) is the L/FRRG motif element. Residues 350-429 (LESKHKRKRA…ISGMSEDGKE (80 aa)) are disordered. A compositionally biased stretch (acidic residues) spans 375-394 (DLDDEIEDDGDDSDVDDVES). A compositionally biased stretch (polar residues) spans 405–421 (LSQGSSNSYTSMNSGIS). 2 WD repeats span residues 464 to 508 (DFLP…DMVP) and 518 to 558 (APAS…GGDC).

Belongs to the WD repeat PROPPIN family. Component of the PI(3,5)P2 regulatory complex.

It localises to the preautophagosomal structure membrane. The protein resides in the vacuole membrane. Its subcellular location is the endosome membrane. Its function is as follows. The PI(3,5)P2 regulatory complex regulates both the synthesis and turnover of phosphatidylinositol 3,5-bisphosphate (PtdIns(3,5)P2). Necessary for proper vacuole morphology. Plays an important role in osmotically-induced vacuole fragmentation. Required for cytoplasm to vacuole transport (Cvt) vesicle formation, pexophagy and starvation-induced autophagy. Involved in correct ATG9 trafficking to the pre-autophagosomal structure. Might also be involved in premeiotic DNA replication. The sequence is that of Autophagy-related protein 18 (ATG18) from Meyerozyma guilliermondii (strain ATCC 6260 / CBS 566 / DSM 6381 / JCM 1539 / NBRC 10279 / NRRL Y-324) (Yeast).